A 483-amino-acid chain; its full sequence is MAYIEGNTGKWEYVIGLEIHAQISSKSKLFSGSSTIFAANPNSQVSYVDAAMPGMLPVLNKHCVHQAIKTGLGLKAKINKYSVFDRKNYFYADLPQGYQISQFYYPIVQNGTMEIPTSTGDLKTIRINRLHLEQDAGKSMHDQSPHYSFIDLNRAGIGLMEIVTEPDISSPEEAAEFVKKLRNLLRYIGSCDGDMEKGSMRCDANISVRRSGEPLGTRCEIKNINSIRNIIKAIEFEAKRQVDLLESGEKIIQETRLFNADSGETRTMRLKEEALDYRYFPDPDLLPLVISDELINELKANLPELPDQKIEKYTKEFSLSKYDAEVIVADESVAEYFEKAANECNPKMLTNWLTSELFGQLNKASIGINECKITPSNFAKLVKLIENDTISGKIAKTVFEIMFETGKAPDKIVEEKGLVQVSDNNVLNTVIDEVIAENPESVEGYRSGKDKLFGFFVGQVMKKTGGKANPTLVNQLLKEKLSS.

Belongs to the GatB/GatE family. GatB subfamily. In terms of assembly, heterotrimer of A, B and C subunits.

It carries out the reaction L-glutamyl-tRNA(Gln) + L-glutamine + ATP + H2O = L-glutaminyl-tRNA(Gln) + L-glutamate + ADP + phosphate + H(+). It catalyses the reaction L-aspartyl-tRNA(Asn) + L-glutamine + ATP + H2O = L-asparaginyl-tRNA(Asn) + L-glutamate + ADP + phosphate + 2 H(+). Its function is as follows. Allows the formation of correctly charged Asn-tRNA(Asn) or Gln-tRNA(Gln) through the transamidation of misacylated Asp-tRNA(Asn) or Glu-tRNA(Gln) in organisms which lack either or both of asparaginyl-tRNA or glutaminyl-tRNA synthetases. The reaction takes place in the presence of glutamine and ATP through an activated phospho-Asp-tRNA(Asn) or phospho-Glu-tRNA(Gln). The sequence is that of Aspartyl/glutamyl-tRNA(Asn/Gln) amidotransferase subunit B from Rickettsia conorii (strain ATCC VR-613 / Malish 7).